Consider the following 263-residue polypeptide: MFAPIDPVKIPVFSDPWITMATLSGYLLFVLKLGPKIMENRKPFHLSGVIRVYNIFQILYNGLILVLGVHFLFVLKAYQISCIVSLPMDHKYKDRERLICILYMLNKFVDLVETIFFVLRKKDRQISFLHVFHHFAMAFLGYLYYYFHGYGGVAFPQCLCLLNTAVHVIMYAYYYLSSISQELQRSLWWKKYITIAQLVQFGIILLHCTITLAQPDCAVNRPLTYGCGSLSAFFAVIFSQFYYHNYIKPGEKSSKQSAIHKNL.

A run of 7 helical transmembrane segments spans residues 10–30 (IPVF…LLFV), 55–75 (IFQI…LFVL), 98–118 (LICI…IFFV), 135–155 (FAMA…GVAF), 159–179 (LCLL…LSSI), 193–213 (ITIA…ITLA), and 223–243 (LTYG…QFYY).

Belongs to the ELO family. In terms of tissue distribution, no expression in adults.

The protein localises to the endoplasmic reticulum membrane. The enzyme catalyses a very-long-chain acyl-CoA + malonyl-CoA + H(+) = a very-long-chain 3-oxoacyl-CoA + CO2 + CoA. Condensing enzyme that elongates saturated and monounsaturated very long chain fatty acids, to yield products up to 30 carbons in length. This Drosophila simulans (Fruit fly) protein is Very long chain fatty acid elongase F.